We begin with the raw amino-acid sequence, 469 residues long: Glutamate--tRNA ligase (469 aa).

The short motif at 11–21 is the 'HIGH' region element; sequence PSPTGFIHLGN. The 'KMSKS' region signature appears at 243 to 247; that stretch reads KMSKR. K246 lines the ATP pocket.

Belongs to the class-I aminoacyl-tRNA synthetase family. Glutamate--tRNA ligase type 1 subfamily. As to quaternary structure, monomer.

Its subcellular location is the cytoplasm. It catalyses the reaction tRNA(Glu) + L-glutamate + ATP = L-glutamyl-tRNA(Glu) + AMP + diphosphate. Catalyzes the attachment of glutamate to tRNA(Glu) in a two-step reaction: glutamate is first activated by ATP to form Glu-AMP and then transferred to the acceptor end of tRNA(Glu). The polypeptide is Glutamate--tRNA ligase (Burkholderia cenocepacia (strain HI2424)).